The primary structure comprises 689 residues: Glycine--tRNA ligase beta subunit (689 aa).

This sequence belongs to the class-II aminoacyl-tRNA synthetase family. Tetramer of two alpha and two beta subunits.

The protein resides in the cytoplasm. The enzyme catalyses tRNA(Gly) + glycine + ATP = glycyl-tRNA(Gly) + AMP + diphosphate. The sequence is that of Glycine--tRNA ligase beta subunit from Shewanella baltica (strain OS155 / ATCC BAA-1091).